A 126-amino-acid polypeptide reads, in one-letter code: Small ribosomal subunit protein uS13 (126 aa).

The tract at residues 95–126 is disordered; that stretch reads NLPVHGQRTHTNARTRKGPRRAIAGKKKAGKK.

It belongs to the universal ribosomal protein uS13 family. In terms of assembly, part of the 30S ribosomal subunit. Forms a loose heterodimer with protein S19. Forms two bridges to the 50S subunit in the 70S ribosome.

Its function is as follows. Located at the top of the head of the 30S subunit, it contacts several helices of the 16S rRNA. In the 70S ribosome it contacts the 23S rRNA (bridge B1a) and protein L5 of the 50S subunit (bridge B1b), connecting the 2 subunits; these bridges are implicated in subunit movement. Contacts the tRNAs in the A and P-sites. This Frankia casuarinae (strain DSM 45818 / CECT 9043 / HFP020203 / CcI3) protein is Small ribosomal subunit protein uS13.